A 336-amino-acid polypeptide reads, in one-letter code: Fructose-1,6-bisphosphatase class 1 (336 aa).

Positions 90, 112, 114, and 115 each coordinate Mg(2+). Residues Asp115–Ser118, Asn211, and Lys277 each bind substrate. Glu283 provides a ligand contact to Mg(2+).

The protein belongs to the FBPase class 1 family. As to quaternary structure, homotetramer. Mg(2+) is required as a cofactor.

The protein localises to the cytoplasm. The enzyme catalyses beta-D-fructose 1,6-bisphosphate + H2O = beta-D-fructose 6-phosphate + phosphate. Its pathway is carbohydrate biosynthesis; gluconeogenesis. The chain is Fructose-1,6-bisphosphatase class 1 from Pseudomonas aeruginosa (strain ATCC 15692 / DSM 22644 / CIP 104116 / JCM 14847 / LMG 12228 / 1C / PRS 101 / PAO1).